We begin with the raw amino-acid sequence, 257 residues long: 6-phosphogluconolactonase (257 aa).

Ala-2 bears the N-acetylalanine mark. Position 49 is a phosphoserine (Ser-49). An N6-acetyllysine modification is found at Lys-180.

Belongs to the glucosamine/galactosamine-6-phosphate isomerase family. 6-phosphogluconolactonase subfamily.

Its subcellular location is the cytoplasm. It catalyses the reaction 6-phospho-D-glucono-1,5-lactone + H2O = 6-phospho-D-gluconate + H(+). It participates in carbohydrate degradation; pentose phosphate pathway; D-ribulose 5-phosphate from D-glucose 6-phosphate (oxidative stage): step 2/3. Functionally, hydrolysis of 6-phosphogluconolactone to 6-phosphogluconate. This is 6-phosphogluconolactonase from Rattus norvegicus (Rat).